An 892-amino-acid polypeptide reads, in one-letter code: Alanine--tRNA ligase (892 aa).

Positions 596, 600, 700, and 704 each coordinate Zn(2+).

It belongs to the class-II aminoacyl-tRNA synthetase family. Zn(2+) is required as a cofactor.

The protein localises to the cytoplasm. It catalyses the reaction tRNA(Ala) + L-alanine + ATP = L-alanyl-tRNA(Ala) + AMP + diphosphate. Its function is as follows. Catalyzes the attachment of alanine to tRNA(Ala) in a two-step reaction: alanine is first activated by ATP to form Ala-AMP and then transferred to the acceptor end of tRNA(Ala). Also edits incorrectly charged Ser-tRNA(Ala) and Gly-tRNA(Ala) via its editing domain. The protein is Alanine--tRNA ligase of Methanococcus maripaludis (strain C6 / ATCC BAA-1332).